The sequence spans 280 residues: MKIKAYAKINLSLDIVGVREDGYHLLEMVMQTIDLYDVVHLNIKDKDIEINSNNCNIPLDNRNLAYKAAKLFKETFNIKEGVEIYIEKNIPIEAGLAGGSSDAAAVLRGLRDIFMPNLNNKELAKIGVRIGADVPYCIYGGTAFCEGIGEKITKLNPFKDHYLVLVKPDFGICTKETYSKIDKKEIIKHPDTKEIIKSIGENNLKLLCKNMENILEIVTLEERSNLKDIKKELLQYGSLGAQMTGSGPTIFGFFPYRDSAENCYRKMKSKYNEVYISKTI.

Residue Lys-8 is part of the active site. An ATP-binding site is contributed by 91-101 (PIEAGLAGGSS). Asp-133 is an active-site residue.

The protein belongs to the GHMP kinase family. IspE subfamily.

The enzyme catalyses 4-CDP-2-C-methyl-D-erythritol + ATP = 4-CDP-2-C-methyl-D-erythritol 2-phosphate + ADP + H(+). It participates in isoprenoid biosynthesis; isopentenyl diphosphate biosynthesis via DXP pathway; isopentenyl diphosphate from 1-deoxy-D-xylulose 5-phosphate: step 3/6. Catalyzes the phosphorylation of the position 2 hydroxy group of 4-diphosphocytidyl-2C-methyl-D-erythritol. This Clostridium tetani (strain Massachusetts / E88) protein is 4-diphosphocytidyl-2-C-methyl-D-erythritol kinase.